We begin with the raw amino-acid sequence, 369 residues long: Peptide chain release factor 2 (369 aa).

Gln251 is subject to N5-methylglutamine.

This sequence belongs to the prokaryotic/mitochondrial release factor family. Methylated by PrmC. Methylation increases the termination efficiency of RF2.

It is found in the cytoplasm. Functionally, peptide chain release factor 2 directs the termination of translation in response to the peptide chain termination codons UGA and UAA. This is Peptide chain release factor 2 from Chlamydia trachomatis serovar A (strain ATCC VR-571B / DSM 19440 / HAR-13).